Consider the following 82-residue polypeptide: Small ribosomal subunit protein eS21 (82 aa).

Belongs to the eukaryotic ribosomal protein eS21 family.

This is Small ribosomal subunit protein eS21 (RPS21) from Oryza sativa subsp. japonica (Rice).